The following is a 698-amino-acid chain: RNA cytosine-C(5)-methyltransferase NSUN2 (698 aa).

Basic residues predominate over residues 1 to 10 (MGRKNRRNRQ). Residues 1–28 (MGRKNRRNRQRRTEQRSPAEEERRKARE) form a disordered region. Basic and acidic residues predominate over residues 11–28 (RRTEQRSPAEEERRKARE). S-adenosyl-L-methionine contacts are provided by residues 182–188 (CAAPGSK), aspartate 213, aspartate 240, and aspartate 266. Cysteine 319 serves as the catalytic Nucleophile. The segment at 472-496 (AVDAENGETKPCTNQSGSSKTDSVC) is disordered. Positions 482-493 (PCTNQSGSSKTD) are enriched in polar residues.

It belongs to the class I-like SAM-binding methyltransferase superfamily. RsmB/NOP family. TRM4 subfamily.

It is found in the nucleus. The protein localises to the nucleolus. The protein resides in the cytoplasm. Its subcellular location is the mitochondrion. It localises to the cytoskeleton. It is found in the spindle. The protein localises to the secreted. The protein resides in the extracellular exosome. It carries out the reaction cytidine(48) in tRNA + S-adenosyl-L-methionine = 5-methylcytidine(48) in tRNA + S-adenosyl-L-homocysteine + H(+). The enzyme catalyses cytidine(49) in tRNA + S-adenosyl-L-methionine = 5-methylcytidine(49) in tRNA + S-adenosyl-L-homocysteine + H(+). It catalyses the reaction cytidine(50) in tRNA + S-adenosyl-L-methionine = 5-methylcytidine(50) in tRNA + S-adenosyl-L-homocysteine + H(+). The catalysed reaction is cytidine(34) in tRNA precursor + S-adenosyl-L-methionine = 5-methylcytidine(34) in tRNA precursor + S-adenosyl-L-homocysteine + H(+). It carries out the reaction a cytidine in mRNA + S-adenosyl-L-methionine = a 5-methylcytidine in mRNA + S-adenosyl-L-homocysteine + H(+). In terms of biological role, RNA cytosine C(5)-methyltransferase that methylates cytosine to 5-methylcytosine (m5C) in various RNAs, such as tRNAs, mRNAs and some long non-coding RNAs (lncRNAs). Involved in various processes, such as epidermal stem cell differentiation, testis differentiation and maternal to zygotic transition during early development: acts by increasing protein synthesis; cytosine C(5)-methylation promoting tRNA stability and preventing mRNA decay. Methylates cytosine to 5-methylcytosine (m5C) at positions 34 and 48 of intron-containing tRNA(Leu)(CAA) precursors, and at positions 48, 49 and 50 of tRNA(Gly)(GCC) precursors. tRNA methylation is required generation of RNA fragments derived from tRNAs (tRFs). Also mediates C(5)-methylation of mitochondrial tRNAs. Catalyzes cytosine C(5)-methylation of mRNAs, leading to stabilize them and prevent mRNA decay. Cytosine C(5)-methylation of mRNAs also regulates mRNA export. Also mediates cytosine C(5)-methylation of non-coding RNAs, such as vault RNAs (vtRNAs), promoting their processing into regulatory small RNAs. Required for proper spindle assembly and chromosome segregation, independently of its methyltransferase activity. This Xenopus laevis (African clawed frog) protein is RNA cytosine-C(5)-methyltransferase NSUN2.